The chain runs to 251 residues: Triosephosphate isomerase (251 aa).

A substrate-binding site is contributed by 9 to 11 (NWK). His-95 functions as the Electrophile in the catalytic mechanism. Glu-167 (proton acceptor) is an active-site residue. Substrate contacts are provided by residues Gly-173, Ser-213, and 234 to 235 (GG).

Belongs to the triosephosphate isomerase family. Homodimer.

It is found in the cytoplasm. It catalyses the reaction D-glyceraldehyde 3-phosphate = dihydroxyacetone phosphate. It functions in the pathway carbohydrate biosynthesis; gluconeogenesis. Its pathway is carbohydrate degradation; glycolysis; D-glyceraldehyde 3-phosphate from glycerone phosphate: step 1/1. Its function is as follows. Involved in the gluconeogenesis. Catalyzes stereospecifically the conversion of dihydroxyacetone phosphate (DHAP) to D-glyceraldehyde-3-phosphate (G3P). This is Triosephosphate isomerase from Trichlorobacter lovleyi (strain ATCC BAA-1151 / DSM 17278 / SZ) (Geobacter lovleyi).